Here is a 538-residue protein sequence, read N- to C-terminus: Beta-1-syntrophin (538 aa).

Position 2 is an N-acetylalanine (Ala2). 2 consecutive PH domains span residues Arg19–Asn298 and Glu322–His433. Phosphoserine occurs at positions 87, 126, and 205. The PDZ domain maps to Gly112–Arg195. The interval Ser205 to Phe237 is disordered. Thr214 carries the phosphothreonine modification. A phosphoserine mark is found at Ser219, Ser232, Ser236, and Ser389. Residues Ser225–Ser236 are compositionally biased toward low complexity. The region spanning Pro482–Ala538 is the SU domain. Residues Pro518 to Ala538 are calmodulin-binding.

This sequence belongs to the syntrophin family. As to quaternary structure, monomer and homodimer. Interacts with the other members of the syntrophin family SNTA1 and SNTB2; with the sodium channel proteins SCN4A and SCN5A. Interacts with the viral HTLV-1 TAX protein and with dystrophin protein DMD and related proteins DTNA and UTRN. Interacts with DTNB. Phosphorylated by CaM-kinase II. In terms of tissue distribution, ubiquitous.

Its subcellular location is the cell membrane. It localises to the sarcolemma. It is found in the cell junction. The protein localises to the cytoplasm. The protein resides in the cytoskeleton. Adapter protein that binds to and probably organizes the subcellular localization of a variety of membrane proteins. May link various receptors to the actin cytoskeleton and the dystrophin glycoprotein complex. The chain is Beta-1-syntrophin (SNTB1) from Homo sapiens (Human).